A 968-amino-acid polypeptide reads, in one-letter code: RNA polymerase-associated protein RapA (968 aa).

A Helicase ATP-binding domain is found at 164–334 (DVGRRHAPRV…FARLRLLDPN (171 aa)). ATP is bound at residue 177–184 (DEVGLGKT). The DEAH box motif lies at 280–283 (DEAH). The Helicase C-terminal domain maps to 490 to 685 (RVEWLMGYLT…ALKAQLEQGR (196 aa)).

Belongs to the SNF2/RAD54 helicase family. RapA subfamily. As to quaternary structure, interacts with the RNAP. Has a higher affinity for the core RNAP than for the holoenzyme. Its ATPase activity is stimulated by binding to RNAP.

In terms of biological role, transcription regulator that activates transcription by stimulating RNA polymerase (RNAP) recycling in case of stress conditions such as supercoiled DNA or high salt concentrations. Probably acts by releasing the RNAP, when it is trapped or immobilized on tightly supercoiled DNA. Does not activate transcription on linear DNA. Probably not involved in DNA repair. In Salmonella paratyphi C (strain RKS4594), this protein is RNA polymerase-associated protein RapA.